We begin with the raw amino-acid sequence, 122 residues long: Large ribosomal subunit protein uL14 (122 aa).

The protein belongs to the universal ribosomal protein uL14 family. As to quaternary structure, part of the 50S ribosomal subunit. Forms a cluster with proteins L3 and L19. In the 70S ribosome, L14 and L19 interact and together make contacts with the 16S rRNA in bridges B5 and B8.

In terms of biological role, binds to 23S rRNA. Forms part of two intersubunit bridges in the 70S ribosome. The sequence is that of Large ribosomal subunit protein uL14 from Bdellovibrio bacteriovorus (strain ATCC 15356 / DSM 50701 / NCIMB 9529 / HD100).